Here is a 3373-residue protein sequence, read N- to C-terminus: Intermembrane lipid transfer protein vps13A (3373 aa).

The Chorein N-terminal domain maps to 3–119; it reads FEGLVSDVLS…QAELKKKKLE (117 aa). Disordered stretches follow at residues 818–858, 1028–1096, 1259–1304, 1648–1729, and 1872–1913; these read PKAT…VNSS, VPIN…KTAS, NNNK…DLEK, DPSI…EEEK, and QKKR…GKKD. Polar residues predominate over residues 823 to 839; sequence TPINDSNSPSSVSPKLI. Low complexity-rich tracts occupy residues 840 to 858 and 1048 to 1066; these read STSP…VNSS and SSPN…QSPQ. Basic and acidic residues-rich tracts occupy residues 1263 to 1274 and 1288 to 1304; these read SIEKSKSIDSKL and RSDD…DLEK. 3 stretches are compositionally biased toward low complexity: residues 1659–1685, 1695–1716, and 1884–1898; these read QQQQ…RSQS, SSIG…SLSS, and SSST…STNS. Polar residues predominate over residues 1899–1909; the sequence is FQTSTSGNSNS. An SHR-BD domain is found at 2405-2706; sequence TLSFYCQYWL…CYGWDEPSAE (302 aa). The disordered stretch occupies residues 2909-2933; that stretch reads RGNNASNNNNNNGMTSSQMRQSGSG. The segment covering 2911-2920 has biased composition (low complexity); it reads NNASNNNNNN.

It belongs to the VPS13 family.

The protein resides in the membrane. In terms of biological role, mediates the transfer of lipids between membranes at organelle contact sites. This Dictyostelium discoideum (Social amoeba) protein is Intermembrane lipid transfer protein vps13A (vps13A).